Reading from the N-terminus, the 262-residue chain is Adenosylcobinamide-GDP ribazoletransferase (262 aa).

The next 5 helical transmembrane spans lie at 41–63 (AFPF…LMAL), 68–85 (LFAA…TGAL), 115–134 (IGTY…VSAF), 141–163 (FSPL…AMVW), and 201–221 (LLFY…VAFL).

It belongs to the CobS family. In terms of assembly, associated with a large complex of proteins. Requires Mg(2+) as cofactor.

It localises to the cell inner membrane. The catalysed reaction is alpha-ribazole + adenosylcob(III)inamide-GDP = adenosylcob(III)alamin + GMP + H(+). It catalyses the reaction alpha-ribazole 5'-phosphate + adenosylcob(III)inamide-GDP = adenosylcob(III)alamin 5'-phosphate + GMP + H(+). It participates in cofactor biosynthesis; adenosylcobalamin biosynthesis; adenosylcobalamin from cob(II)yrinate a,c-diamide: step 7/7. Joins adenosylcobinamide-GDP and alpha-ribazole to generate adenosylcobalamin (Ado-cobalamin). Also synthesizes adenosylcobalamin 5'-phosphate from adenosylcobinamide-GDP and alpha-ribazole 5'-phosphate. This is Adenosylcobinamide-GDP ribazoletransferase (cobV) from Sinorhizobium sp.